The following is a 184-amino-acid chain: Probable RNA 2'-phosphotransferase (184 aa).

It belongs to the KptA/TPT1 family.

Removes the 2'-phosphate from RNA via an intermediate in which the phosphate is ADP-ribosylated by NAD followed by a presumed transesterification to release the RNA and generate ADP-ribose 1''-2''-cyclic phosphate (APPR&gt;P). May function as an ADP-ribosylase. This is Probable RNA 2'-phosphotransferase from Rhodopirellula baltica (strain DSM 10527 / NCIMB 13988 / SH1).